Consider the following 166-residue polypeptide: Interferon gamma (166 aa).

Positions 1 to 23 (MKYTSYFLALQLCLLLGFSGSYG) are cleaved as a signal peptide. A Pyrrolidone carboxylic acid modification is found at Gln-24. Residues Asn-39 and Asn-106 are each glycosylated (N-linked (GlcNAc...) asparagine).

This sequence belongs to the type II (or gamma) interferon family. As to quaternary structure, homodimer. Interacts with IFNGR1 (via extracellular domain); this interaction promotes IFNGR1 dimerization. As to expression, released primarily from activated T lymphocytes.

It is found in the secreted. Type II interferon produced by immune cells such as T-cells and NK cells that plays crucial roles in antimicrobial, antiviral, and antitumor responses by activating effector immune cells and enhancing antigen presentation. Primarily signals through the JAK-STAT pathway after interaction with its receptor IFNGR1 to affect gene regulation. Upon IFNG binding, IFNGR1 intracellular domain opens out to allow association of downstream signaling components JAK2, JAK1 and STAT1, leading to STAT1 activation, nuclear translocation and transcription of IFNG-regulated genes. Many of the induced genes are transcription factors such as IRF1 that are able to further drive regulation of a next wave of transcription. Plays a role in class I antigen presentation pathway by inducing a replacement of catalytic proteasome subunits with immunoproteasome subunits. In turn, increases the quantity, quality, and repertoire of peptides for class I MHC loading. Increases the efficiency of peptide generation also by inducing the expression of activator PA28 that associates with the proteasome and alters its proteolytic cleavage preference. Up-regulates as well MHC II complexes on the cell surface by promoting expression of several key molecules such as cathepsins B/CTSB, H/CTSH, and L/CTSL. Participates in the regulation of hematopoietic stem cells during development and under homeostatic conditions by affecting their development, quiescence, and differentiation. This is Interferon gamma (IFNG) from Moschus berezovskii (Chinese forest musk deer).